Here is a 192-residue protein sequence, read N- to C-terminus: Interleukin-18 (192 aa).

Residues 1–35 constitute a propeptide that is removed on maturation; that stretch reads MAAMSEDSCVNFKEMMFIDNTLYFIPEENGDLESD.

Belongs to the IL-1 family. In terms of assembly, forms a ternary complex with ligand-binding receptor subunit IL18R1 and signaling receptor subunit IL18RAP at the plasma membrane. Mature IL18 first binds to IL18R1 forming a low affinity binary complex, which then interacts with IL18RAP to form a high affinity ternary complex that signals inside the cell. Interacts with cargo receptor TMED10; the interaction mediates the translocation from the cytoplasm into the ERGIC (endoplasmic reticulum-Golgi intermediate compartment) and thereby secretion. In terms of processing, the pro-IL-18 precursor is processed by CASP1 to yield its mature, active form. The pro-IL-18 precursor is however not processed by Casp4/Casp11 in rodents. The pro-IL-18 precursor features autoinhibitory interactions between the propeptide and the post-cleavage-site region, preventing recognition by the IL18R1 receptor. Processing by CASP1 induces conformational changes to generate critical receptor-binding sites. The mature form is then secreted and released in the extracellular milieu by passing through the gasdermin-D (GSDMD) pore. In contrast, cleavage by CASP3 inactivates IL18.

It is found in the cytoplasm. The protein localises to the secreted. Pro-inflammatory cytokine primarily involved in epithelial barrier repair, polarized T-helper 1 (Th1) cell and natural killer (NK) cell immune responses. Upon binding to IL18R1 and IL18RAP, forms a signaling ternary complex which activates NF-kappa-B, triggering synthesis of inflammatory mediators. Synergizes with IL12/interleukin-12 to induce IFNG synthesis from T-helper 1 (Th1) cells and natural killer (NK) cells. Involved in transduction of inflammation downstream of pyroptosis: its mature form is specifically released in the extracellular milieu by passing through the gasdermin-D (GSDMD) pore. In Mus musculus (Mouse), this protein is Interleukin-18.